Reading from the N-terminus, the 225-residue chain is NAD(P)H-quinone oxidoreductase subunit K, chloroplastic (225 aa).

Cysteine 43, cysteine 44, cysteine 108, and cysteine 139 together coordinate [4Fe-4S] cluster.

This sequence belongs to the complex I 20 kDa subunit family. NDH is composed of at least 16 different subunits, 5 of which are encoded in the nucleus. Requires [4Fe-4S] cluster as cofactor.

Its subcellular location is the plastid. The protein localises to the chloroplast thylakoid membrane. It catalyses the reaction a plastoquinone + NADH + (n+1) H(+)(in) = a plastoquinol + NAD(+) + n H(+)(out). The enzyme catalyses a plastoquinone + NADPH + (n+1) H(+)(in) = a plastoquinol + NADP(+) + n H(+)(out). Functionally, NDH shuttles electrons from NAD(P)H:plastoquinone, via FMN and iron-sulfur (Fe-S) centers, to quinones in the photosynthetic chain and possibly in a chloroplast respiratory chain. The immediate electron acceptor for the enzyme in this species is believed to be plastoquinone. Couples the redox reaction to proton translocation, and thus conserves the redox energy in a proton gradient. This Dioscorea elephantipes (Elephant's foot yam) protein is NAD(P)H-quinone oxidoreductase subunit K, chloroplastic.